A 385-amino-acid chain; its full sequence is Putative 8-amino-7-oxononanoate synthase (385 aa).

R22 serves as a coordination point for substrate. 109–110 (GY) lines the pyridoxal 5'-phosphate pocket. H134 provides a ligand contact to substrate. Residues S182, 207 to 210 (DEAH), and 238 to 241 (TLSK) contribute to the pyridoxal 5'-phosphate site. K241 is modified (N6-(pyridoxal phosphate)lysine). T353 is a substrate binding site.

Belongs to the class-II pyridoxal-phosphate-dependent aminotransferase family. BioF subfamily. Homodimer. Pyridoxal 5'-phosphate serves as cofactor.

The enzyme catalyses 6-carboxyhexanoyl-[ACP] + L-alanine + H(+) = (8S)-8-amino-7-oxononanoate + holo-[ACP] + CO2. The protein operates within cofactor biosynthesis; biotin biosynthesis. In terms of biological role, catalyzes the decarboxylative condensation of pimeloyl-[acyl-carrier protein] and L-alanine to produce 8-amino-7-oxononanoate (AON), [acyl-carrier protein], and carbon dioxide. The chain is Putative 8-amino-7-oxononanoate synthase (bioF) from Microcystis aeruginosa (strain NIES-843 / IAM M-2473).